The sequence spans 224 residues: Serum amyloid P-component (224 aa).

The N-terminal stretch at 1-19 is a signal peptide; it reads MERLLLWVSVLASLPEAFA. The 201-residue stretch at 24–224 folds into the Pentraxin (PTX) domain; the sequence is TGKVFVFPRE…YVVIKPRVWS (201 aa). N51 carries N-linked (GlcNAc...) asparagine glycosylation. C55 and C114 are oxidised to a cystine. Ca(2+)-binding residues include D77, N78, E155, Q156, D157, and Q167.

Belongs to the pentraxin family. In terms of assembly, homopentamer. Pentraxin (or pentaxin) have a discoid arrangement of 5 non-covalently bound subunits. Ca(2+) is required as a cofactor.

It localises to the secreted. This chain is Serum amyloid P-component (APCS), found in Sus scrofa (Pig).